A 1480-amino-acid polypeptide reads, in one-letter code: DNA polymerase zeta catalytic subunit (1480 aa).

A disordered region spans residues 403 to 488; that stretch reads DRSKFPKSPL…GDTRKAGKRL (86 aa). Residues 411 to 427 show a composition bias toward polar residues; it reads PLNSSQEVTIHSSQDRQ. Residues 457–468 are compositionally biased toward basic and acidic residues; that stretch reads TKREIEFCRDLP. Polar residues predominate over residues 470 to 479; sequence RPTSSEPNQG. The Zn(2+) site is built by Cys1381, Cys1384, Cys1400, and Cys1403. Residues 1381–1403 form a CysA-type zinc finger; sequence CSSCLKNNIEIIPDKINSLCSDC. Positions 1432, 1435, 1446, and 1451 each coordinate [4Fe-4S] cluster. Residues 1432 to 1451 carry the CysB motif motif; that stretch reads CRGCSKLSSSDPVLCKSNSC.

The protein belongs to the DNA polymerase type-B family. Forms DNA polymerase zeta with rev7. [4Fe-4S] cluster serves as cofactor.

The protein localises to the mitochondrion. It localises to the nucleus. The catalysed reaction is DNA(n) + a 2'-deoxyribonucleoside 5'-triphosphate = DNA(n+1) + diphosphate. Its function is as follows. Nonessential DNA polymerase. Required for DNA damage induced mutagenesis. Involved in DNA repair, mitochondrial DNA repair and translesion synthesis. Has a role in the bypass of abasic (AP) sites. The protein is DNA polymerase zeta catalytic subunit (rev3) of Schizosaccharomyces pombe (strain 972 / ATCC 24843) (Fission yeast).